We begin with the raw amino-acid sequence, 328 residues long: GMP reductase (328 aa).

Cysteine 176 functions as the Thioimidate intermediate in the catalytic mechanism. 205–228 (IIADGGIRTHGDIAKSIRFGASMV) serves as a coordination point for NADP(+).

This sequence belongs to the IMPDH/GMPR family. GuaC type 2 subfamily.

It catalyses the reaction IMP + NH4(+) + NADP(+) = GMP + NADPH + 2 H(+). Catalyzes the irreversible NADPH-dependent deamination of GMP to IMP. It functions in the conversion of nucleobase, nucleoside and nucleotide derivatives of G to A nucleotides, and in maintaining the intracellular balance of A and G nucleotides. The chain is GMP reductase from Streptococcus pneumoniae (strain Hungary19A-6).